The sequence spans 544 residues: Serine/threonine-protein kinase PAK 1 (544 aa).

A disordered region spans residues 1–77 (MSNNGLDIQD…KEKERPEISL (77 aa)). The residue at position 2 (Ser-2) is an N-acetylserine. At Ser-21 the chain carries Phosphoserine; by PKB and autocatalysis. Residues 68-77 (KEKERPEISL) are compositionally biased toward basic and acidic residues. Residues 70-140 (KERPEISLPS…YNSKKTSNSQ (71 aa)) form an autoregulatory region region. The CRIB domain maps to 75–88 (ISLPSDFEHTIHVG). The tract at residues 75 to 105 (ISLPSDFEHTIHVGFDAVTGEFTGMPEQWAR) is GTPase-binding. A Phosphothreonine; by OXSR1 modification is found at Thr-84. Ser-115 carries the phosphoserine modification. A phosphotyrosine mark is found at Tyr-131 and Tyr-142. 2 positions are modified to phosphoserine; by autocatalysis: Ser-144 and Ser-149. The residue at position 153 (Tyr-153) is a Phosphotyrosine; by JAK2. The segment at 161–193 (VKAVSETPAVPPVSEDEDDDDDGTPPPVIAPRP) is disordered. Residue Ser-174 is modified to Phosphoserine. The span at 174–183 (SEDEDDDDDG) shows a compositional bias: acidic residues. Position 184 is a phosphothreonine (Thr-184). Residue Ser-198 is modified to Phosphoserine; by autocatalysis. At Tyr-200 the chain carries Phosphotyrosine; by JAK2. A Phosphoserine; by autocatalysis modification is found at Ser-203. Residues Thr-211 and Thr-218 each carry the phosphothreonine modification. The interval 212–250 (PTRDVATSPISPTENNTTPPDALTRNTEKQKKKPKMSDE) is disordered. Phosphoserine is present on residues Ser-219 and Ser-222. Residues 219-230 (SPISPTENNTTP) are compositionally biased toward polar residues. Phosphothreonine occurs at positions 224, 228, and 229. The Protein kinase domain maps to 269–520 (YTRFEKIGQG…AKELLQHQFL (252 aa)). 275–283 (IGQGASGTV) provides a ligand contact to ATP. Tyr-284 carries the phosphotyrosine; by JAK2 modification. Position 298 (Lys-298) interacts with ATP. Residue Asp-388 is the Proton acceptor of the active site. Residue Thr-422 is modified to Phosphothreonine; by autocatalysis, BRSK2 and PDPK1.

Belongs to the protein kinase superfamily. STE Ser/Thr protein kinase family. STE20 subfamily. As to quaternary structure, homodimer in its autoinhibited state. Active as monomer. Interacts with GIT1. Component of cytoplasmic complexes, which also contains PXN, ARHGEF7 and GIT1. Interacts with NISCH. Interacts with DVL1; mediates the formation of a DVL1, MUSK and PAK1 ternary complex involved in AChR clustering. Binds to the caspase-cleaved p110 isoform of CDC2L1 and CDC2L2, p110C, but not the full-length proteins. Interacts with ARHGEF7. Interacts tightly with GTP-bound but not GDP-bound CDC42/P21 and RAC1. Probably found in a ternary complex composed of DSCAM, PAK1 and RAC1. Interacts with DSCAM (via cytoplasmic domain); the interaction is direct and enhanced in presence of RAC1. Interacts with SCRIB. Interacts with PDPK1. Interacts (via kinase domain) with RAF1. Interacts with NCK1 and NCK2. Interacts with TBCB. Interacts with BRSK2. Interacts with SNAI1. Interacts with CIB1 (via N-terminal region); the interaction is direct, promotes PAK1 activity and occurs in a calcium-dependent manner. Interacts with INPP5K. Interacts with gamma-tubulin. Interacts with RHOU; the interaction promotes PAK1 activation. Mg(2+) serves as cofactor. Post-translationally, autophosphorylated in trans, meaning that in a dimer, one kinase molecule phosphorylates the other one. Activated by autophosphorylation at Thr-422 in response to a conformation change, triggered by interaction with GTP-bound CDC42 or RAC1. Activated by phosphorylation at Thr-422 by BRSK2 and by PDPK1. Phosphorylated by JAK2 in response to PRL; this increases PAK1 kinase activity. Phosphorylated at Ser-21 by PKB/AKT; this reduces interaction with NCK1 and association with focal adhesion sites. Upon DNA damage, phosphorylated at Thr-211 and translocates to the nucleoplasm. Phosphorylated at tyrosine residues, which can be enhanced by NTN1.

It is found in the cytoplasm. Its subcellular location is the cell junction. The protein resides in the focal adhesion. It localises to the cell projection. The protein localises to the lamellipodium. It is found in the cell membrane. Its subcellular location is the ruffle membrane. The protein resides in the invadopodium. It localises to the nucleus. The protein localises to the nucleoplasm. It is found in the chromosome. Its subcellular location is the cytoskeleton. The protein resides in the microtubule organizing center. It localises to the centrosome. The enzyme catalyses L-seryl-[protein] + ATP = O-phospho-L-seryl-[protein] + ADP + H(+). It catalyses the reaction L-threonyl-[protein] + ATP = O-phospho-L-threonyl-[protein] + ADP + H(+). With respect to regulation, phosphorylation of Thr-84 by OXSR1 inhibits activation. Activated by binding small G proteins. Binding of GTP-bound CDC42 or RAC1 to the autoregulatory region releases monomers from the autoinhibited dimer, and enables activation by phosphorylation of Thr-422. In terms of biological role, protein kinase involved in intracellular signaling pathways downstream of integrins and receptor-type kinases that plays an important role in cytoskeleton dynamics, in cell adhesion, migration, proliferation, apoptosis, mitosis, and in vesicle-mediated transport processes. Can directly phosphorylate BAD and protects cells against apoptosis. Activated by interaction with CDC42 and RAC1. Functions as a GTPase effector that links the Rho-related GTPases CDC42 and RAC1 to the JNK MAP kinase pathway. Phosphorylates and activates MAP2K1, and thereby mediates activation of downstream MAP kinases. Involved in the reorganization of the actin cytoskeleton, actin stress fibers and of focal adhesion complexes. Phosphorylates the tubulin chaperone TBCB and thereby plays a role in the regulation of microtubule biogenesis and organization of the tubulin cytoskeleton. Plays a role in the regulation of insulin secretion in response to elevated glucose levels. Part of a ternary complex that contains PAK1, DVL1 and MUSK that is important for MUSK-dependent regulation of AChR clustering during the formation of the neuromuscular junction (NMJ). Activity is inhibited in cells undergoing apoptosis, potentially due to binding of CDC2L1 and CDC2L2. Phosphorylates MYL9/MLC2. Phosphorylates RAF1 at 'Ser-338' and 'Ser-339' resulting in: activation of RAF1, stimulation of RAF1 translocation to mitochondria, phosphorylation of BAD by RAF1, and RAF1 binding to BCL2. Phosphorylates SNAI1 at 'Ser-246' promoting its transcriptional repressor activity by increasing its accumulation in the nucleus. In podocytes, promotes NR3C2 nuclear localization. Required for atypical chemokine receptor ACKR2-induced phosphorylation of LIMK1 and cofilin (CFL1) and for the up-regulation of ACKR2 from endosomal compartment to cell membrane, increasing its efficiency in chemokine uptake and degradation. In synapses, seems to mediate the regulation of F-actin cluster formation performed by SHANK3, maybe through CFL1 phosphorylation and inactivation. Plays a role in RUFY3-mediated facilitating gastric cancer cells migration and invasion. In response to DNA damage, phosphorylates MORC2 which activates its ATPase activity and facilitates chromatin remodeling. In neurons, plays a crucial role in regulating GABA(A) receptor synaptic stability and hence GABAergic inhibitory synaptic transmission through its role in F-actin stabilization. In hippocampal neurons, necessary for the formation of dendritic spines and excitatory synapses; this function is dependent on kinase activity and may be exerted by the regulation of actomyosin contractility through the phosphorylation of myosin II regulatory light chain (MLC). Along with GIT1, positively regulates microtubule nucleation during interphase. Phosphorylates FXR1, promoting its localization to stress granules and activity. Phosphorylates ILK on 'Thr-173' and 'Ser-246', promoting nuclear export of ILK. The polypeptide is Serine/threonine-protein kinase PAK 1 (Bos taurus (Bovine)).